Here is a 345-residue protein sequence, read N- to C-terminus: tRNA N6-adenosine threonylcarbamoyltransferase (345 aa).

Residues His-111 and His-115 each coordinate Fe cation. Residues 134–138 (LVSGG), Asp-167, Gly-180, and Asn-277 each bind substrate. Asp-305 is a binding site for Fe cation.

Belongs to the KAE1 / TsaD family. Fe(2+) is required as a cofactor.

The protein resides in the cytoplasm. The enzyme catalyses L-threonylcarbamoyladenylate + adenosine(37) in tRNA = N(6)-L-threonylcarbamoyladenosine(37) in tRNA + AMP + H(+). Functionally, required for the formation of a threonylcarbamoyl group on adenosine at position 37 (t(6)A37) in tRNAs that read codons beginning with adenine. Is involved in the transfer of the threonylcarbamoyl moiety of threonylcarbamoyl-AMP (TC-AMP) to the N6 group of A37, together with TsaE and TsaB. TsaD likely plays a direct catalytic role in this reaction. This is tRNA N6-adenosine threonylcarbamoyltransferase from Laribacter hongkongensis (strain HLHK9).